Here is a 323-residue protein sequence, read N- to C-terminus: uncharacterized protein (323 aa).

This is an uncharacterized protein from Thermotoga maritima (strain ATCC 43589 / DSM 3109 / JCM 10099 / NBRC 100826 / MSB8).